A 799-amino-acid polypeptide reads, in one-letter code: Putative mRNA-capping enzyme P5 (799 aa).

It belongs to the phytoreovirus protein P5 family.

It is found in the virion. It localises to the host cytoplasm. The enzyme catalyses a 5'-end diphospho-ribonucleoside in mRNA + GTP + H(+) = a 5'-end (5'-triphosphoguanosine)-ribonucleoside in mRNA + diphosphate. Its pathway is mRNA processing; mRNA capping. Its function is as follows. Enzyme involved in mRNA capping (Potential). Binds to GTP and might have guanylyltransferase activity. Together with the RNA-directed RNA polymerase P1 and protein P7, forms an transcriptional complex positioned near the channels situated at each of the five-fold vertices of the core. The sequence is that of Putative mRNA-capping enzyme P5 from Nephotettix cincticeps (Green rice leafhopper).